Reading from the N-terminus, the 282-residue chain is ATP synthase gamma chain (282 aa).

Belongs to the ATPase gamma chain family. In terms of assembly, F-type ATPases have 2 components, CF(1) - the catalytic core - and CF(0) - the membrane proton channel. CF(1) has five subunits: alpha(3), beta(3), gamma(1), delta(1), epsilon(1). CF(0) has three main subunits: a, b and c.

It localises to the cell membrane. Produces ATP from ADP in the presence of a proton gradient across the membrane. The gamma chain is believed to be important in regulating ATPase activity and the flow of protons through the CF(0) complex. This is ATP synthase gamma chain from Clostridium botulinum (strain Okra / Type B1).